A 319-amino-acid polypeptide reads, in one-letter code: Free fatty acid receptor 3 (319 aa).

Topologically, residues 1-15 (MGTSFFLGNYWLFFS) are extracellular. The helical transmembrane segment at 16–36 (VYLLVFLVGLPLNVMALVVFV) threads the bilayer. At 37-43 (GKLRRRP) the chain is on the cytoplasmic side. Residues 44-64 (VAVDLLLLNLTISDLLLLLFL) form a helical membrane-spanning segment. At 65-98 (PFRMVEAACGMRWLLPFIFCPLSGFLFFTTIYLT) the chain is on the extracellular side. Cys-84 and Cys-165 form a disulfide bridge. A helical membrane pass occupies residues 99–119 (SLFLTAVSIERFLSVAYPLWY). Residues 120–127 (KTRPRLAQ) lie on the Cytoplasmic side of the membrane. Residues 128-148 (AGLVSVVCWFLASAHCSVVYI) traverse the membrane as a helical segment. The Extracellular segment spans residues 149–183 (TEYWGNATYSQGTNGTCYLEFREDQLAILLPVRLE). 2 N-linked (GlcNAc...) asparagine glycosylation sites follow: Asn-154 and Asn-162. A helical membrane pass occupies residues 184–206 (MAVVLFMVPLCITSYCYSRLVWI). Residues 207–218 (LSRGASRRRRKR) are Cytoplasmic-facing. Residues 219-239 (IMGLLAATLLIFFVCFGPYNM) form a helical membrane-spanning segment. Residues 240-254 (SHVVGYVSRESPSWR) are Extracellular-facing. Residues 255–275 (SYVLLLSTLNSCIDPLVFYFS) traverse the membrane as a helical segment. Over 276-319 (SSKFQADFHQLLGRLLRTCVPWTQQVSLELKVKNGEEPSKECPS) the chain is Cytoplasmic.

The protein belongs to the G-protein coupled receptor 1 family. As to expression, expressed in white adipose tissue and skeletal muscle (at protein level). Abundantly expressed in sympathetic ganglia such as the superior cervical ganglion. Also expressed by intestinal endocrine cells.

Its subcellular location is the cell membrane. Functionally, g protein-coupled receptor that is activated by a major product of dietary fiber digestion, the short chain fatty acids (SCFAs), and that plays a role in the regulation of whole-body energy homeostasis and in intestinal immunity. In omnivorous mammals, the short chain fatty acids acetate, propionate and butyrate are produced primarily by the gut microbiome that metabolizes dietary fibers. SCFAs serve as a source of energy but also act as signaling molecules. That G protein-coupled receptor is probably coupled to the pertussis toxin-sensitive, G(i/o)-alpha family of G proteins. Its activation results in the formation of inositol 1,4,5-trisphosphate, the mobilization of intracellular calcium, the phosphorylation of the MAPK3/ERK1 and MAPK1/ERK2 kinases and the inhibition of intracellular cAMP accumulation. Activated by SCFAs and by beta-hydroxybutyrate, a ketone body produced by the liver upon starvation, it inhibits N-type calcium channels and modulates the activity of sympathetic neurons through a signaling cascade involving the beta and gamma subunits of its coupled G protein, phospholipase C and MAP kinases. Thereby, it may regulate energy expenditure through the control of the sympathetic nervous system that controls for instance heart rate. Upon activation by SCFAs accumulating in the intestine, it may also signal to the brain via neural circuits which in turn would regulate intestinal gluconeogenesis. May also control the production of hormones involved in whole-body energy homeostasis. May for instance, regulate blood pressure through renin secretion. May also regulate secretion of the PYY peptide by enteroendocrine cells and control gut motility, intestinal transit rate, and the harvesting of energy from SCFAs produced by gut microbiota. May also indirectly regulate the production of LEP/Leptin, a hormone acting on the CNS to inhibit food intake, in response to the presence of short-chain fatty acids in the intestine. Finally, may also play a role in glucose homeostasis. Besides its role in energy homeostasis, may play a role in intestinal immunity. May mediate the activation of the inflammatory and immune response by SCFAs in the gut, regulating the rapid production of chemokines and cytokines by intestinal epithelial cells. Exhibits an SCFA-independent constitutive G protein-coupled receptor activity. This is Free fatty acid receptor 3 (Ffar3) from Mus musculus (Mouse).